The following is a 315-amino-acid chain: 2,3-dihydroxyphenylpropionate/2,3-dihydroxicinnamic acid 1,2-dioxygenase (315 aa).

H118 acts as the Proton donor in catalysis. H182 acts as the Proton acceptor in catalysis.

It belongs to the LigB/MhpB extradiol dioxygenase family. As to quaternary structure, homotetramer. Fe(2+) serves as cofactor.

It catalyses the reaction 3-(2,3-dihydroxyphenyl)propanoate + O2 = (2Z,4E)-2-hydroxy-6-oxonona-2,4-dienedioate + H(+). The enzyme catalyses (2E)-3-(2,3-dihydroxyphenyl)prop-2-enoate + O2 = (2Z,4E,7E)-2-hydroxy-6-oxonona-2,4,7-trienedioate + H(+). The protein operates within aromatic compound metabolism; 3-phenylpropanoate degradation. In terms of biological role, catalyzes the non-heme iron(II)-dependent oxidative cleavage of 2,3-dihydroxyphenylpropionic acid and 2,3-dihydroxicinnamic acid into 2-hydroxy-6-ketononadienedioate and 2-hydroxy-6-ketononatrienedioate, respectively. The chain is 2,3-dihydroxyphenylpropionate/2,3-dihydroxicinnamic acid 1,2-dioxygenase from Mycolicibacterium gilvum (strain PYR-GCK) (Mycobacterium gilvum (strain PYR-GCK)).